The sequence spans 185 residues: uncharacterized protein (185 aa).

Residues 1 to 29 form the signal peptide; it reads MKNQEIIEVKSKMFLRIWAFVGSAGMGLA. Residue Cys30 is the site of N-palmitoyl cysteine attachment. Residue Cys30 is the site of S-diacylglycerol cysteine attachment. The helical transmembrane segment at 45 to 67 threads the bilayer; that stretch reads YLLAIPAGFLFTLFCLYLFIIFF.

It to B.subtilis YfjE.

The protein resides in the cell membrane. This is an uncharacterized protein from Bacillus subtilis (strain 168).